A 1255-amino-acid chain; its full sequence is TBC1 domain family member 1 (1255 aa).

Serine 146 carries the phosphoserine modification. Residues 208 to 228 (RTDWEAPTGQPSAPGPRPMRK) are disordered. Position 229 is a phosphoserine; by PKB/AKT1 (serine 229). Serine 231 is modified (phosphoserine; by AMPK). Residues 238–398 (LAFRKEFQDA…LHKLCERIEG (161 aa)) enclose the PID domain. The residue at position 489 (serine 489) is a Phosphoserine; by PKB/AKT1. Serine 497 bears the Phosphoserine mark. The residue at position 499 (threonine 499) is a Phosphothreonine; by PKB/AKT1. Residues serine 501, serine 519, serine 521, serine 559, serine 560, serine 564, serine 565, and serine 579 each carry the phosphoserine modification. Disordered stretches follow at residues 509–544 (GNKA…MGDK) and 559–581 (SSDD…LSPQ). Positions 519–539 (SASVDLDSSTSSTLSNTSKEL) are enriched in low complexity. The residue at position 590 (threonine 590) is a Phosphothreonine. Disordered regions lie at residues 595-614 (PVEC…VSQR) and 621-681 (SVST…GNAV). Serine 608 is modified (phosphoserine). Phosphoserine; by PKB/AKT1 is present on serine 621. Serine 660 and serine 661 each carry phosphoserine. Positions 670–679 (HNSSGEQSGN) are enriched in polar residues. Serine 697 carries the phosphoserine; by PKB/AKT1 modification. Residues serine 698 and serine 699 each carry the phosphoserine modification. At serine 700 the chain carries Phosphoserine; by AMPK. The interval 764–786 (DSPSRYEDYSELGELPPRSPLEP) is disordered. A phosphoserine mark is found at serine 782 and serine 1028. Residues 887–1081 (GVPRHHRGEI…RVFDMIFLQG (195 aa)) form the Rab-GAP TBC domain. A Phosphotyrosine modification is found at tyrosine 1039. Threonine 1218 bears the Phosphothreonine mark. Residues 1233 to 1255 (LRRQSARPSTPEPDCTQLEPTGD) are disordered.

As to quaternary structure, interacts with APPL2 (via BAR domain); interaction is dependent of TBC1D1 phosphorylation at Ser-229; interaction diminishes the phosphorylation of TBC1D1 at Thr-590, resulting in inhibition of SLC2A4/GLUT4 translocation and glucose uptake. Post-translationally, insulin-stimulated phosphorylation by AKT family kinases stimulates SLC2A4/GLUT4 translocation. In terms of tissue distribution, expressed in highest levels in hematopoietic cells, testis and kidney.

It is found in the nucleus. Functionally, may act as a GTPase-activating protein for Rab family protein(s). May play a role in the cell cycle and differentiation of various tissues. Involved in the trafficking and translocation of GLUT4-containing vesicles and insulin-stimulated glucose uptake into cells. The protein is TBC1 domain family member 1 (Tbc1d1) of Mus musculus (Mouse).